Here is a 356-residue protein sequence, read N- to C-terminus: Histidinol-phosphate aminotransferase (356 aa).

Lysine 214 is modified (N6-(pyridoxal phosphate)lysine).

The protein belongs to the class-II pyridoxal-phosphate-dependent aminotransferase family. Histidinol-phosphate aminotransferase subfamily. In terms of assembly, homodimer. Pyridoxal 5'-phosphate serves as cofactor.

The enzyme catalyses L-histidinol phosphate + 2-oxoglutarate = 3-(imidazol-4-yl)-2-oxopropyl phosphate + L-glutamate. It functions in the pathway amino-acid biosynthesis; L-histidine biosynthesis; L-histidine from 5-phospho-alpha-D-ribose 1-diphosphate: step 7/9. This chain is Histidinol-phosphate aminotransferase, found in Escherichia coli O127:H6 (strain E2348/69 / EPEC).